Consider the following 242-residue polypeptide: Methylthioribulose-1-phosphate dehydratase (242 aa).

Over residues 1–11 (MAQEIQKENND) the composition is skewed to basic and acidic residues. The disordered stretch occupies residues 1 to 20 (MAQEIQKENNDHLVQSSDPE). Cysteine 100 is a binding site for substrate. Residues histidine 117 and histidine 119 each coordinate Zn(2+). The active-site Proton donor/acceptor is glutamate 146. Histidine 202 contacts Zn(2+).

The protein belongs to the aldolase class II family. MtnB subfamily. Requires Zn(2+) as cofactor.

The protein resides in the cytoplasm. It catalyses the reaction 5-(methylsulfanyl)-D-ribulose 1-phosphate = 5-methylsulfanyl-2,3-dioxopentyl phosphate + H2O. Its pathway is amino-acid biosynthesis; L-methionine biosynthesis via salvage pathway; L-methionine from S-methyl-5-thio-alpha-D-ribose 1-phosphate: step 2/6. Its function is as follows. Catalyzes the dehydration of methylthioribulose-1-phosphate (MTRu-1-P) into 2,3-diketo-5-methylthiopentyl-1-phosphate (DK-MTP-1-P). This is Methylthioribulose-1-phosphate dehydratase from Aspergillus niger (strain ATCC MYA-4892 / CBS 513.88 / FGSC A1513).